A 740-amino-acid chain; its full sequence is Anaphase-promoting complex subunit 5 (740 aa).

Serine 180 is subject to Phosphoserine. TPR repeat units follow at residues 194 to 234 (QKQA…FNPD), 235 to 285 (FAEA…GRSL), 286 to 322 (RYAA…SNDH), 323 to 363 (VCLQ…YLAS), 364 to 403 (LGIQ…SELI), 404 to 451 (DISI…TESF), 452 to 485 (AVAL…FPPN), 486 to 525 (SQHA…ALNG), 526 to 565 (IEGV…TEMV), 566 to 605 (ISVL…QYLA), 606 to 645 (SETV…VLDK), 646 to 681 (GRAM…NLSE), and 682 to 721 (AKNY…CAMI). The residue at position 217 (threonine 217) is a Phosphothreonine.

It belongs to the APC5 family. In terms of assembly, the mammalian APC/C is composed at least of 14 distinct subunits ANAPC1, ANAPC2, CDC27/APC3, ANAPC4, ANAPC5, CDC16/APC6, ANAPC7, CDC23/APC8, ANAPC10, ANAPC11, CDC26/APC12, ANAPC13, ANAPC15 and ANAPC16 that assemble into a complex of at least 19 chains with a combined molecular mass of around 1.2 MDa; APC/C interacts with FZR1 and FBXO5.

The protein localises to the nucleus. It localises to the cytoplasm. Its subcellular location is the cytoskeleton. It is found in the spindle. It participates in protein modification; protein ubiquitination. In terms of biological role, component of the anaphase promoting complex/cyclosome (APC/C), a cell cycle-regulated E3 ubiquitin ligase that controls progression through mitosis and the G1 phase of the cell cycle. The APC/C complex acts by mediating ubiquitination and subsequent degradation of target proteins: it mainly mediates the formation of 'Lys-11'-linked polyubiquitin chains and, to a lower extent, the formation of 'Lys-48'- and 'Lys-63'-linked polyubiquitin chains. The APC/C complex catalyzes assembly of branched 'Lys-11'-/'Lys-48'-linked branched ubiquitin chains on target proteins. The chain is Anaphase-promoting complex subunit 5 (Anapc5) from Mus musculus (Mouse).